Consider the following 252-residue polypeptide: Small ribosomal subunit protein uS3 (252 aa).

A KH type-2 domain is found at 38–106; sequence IRKYIHARLS…EVQINIFEIK (69 aa). The segment at 214-252 is disordered; that stretch reads PLAGMDKKQSGTGGGKGGDAPRGKSNFNKGGKPDARKRK. Gly residues predominate over residues 224-233; that stretch reads GTGGGKGGDA.

Belongs to the universal ribosomal protein uS3 family. As to quaternary structure, part of the 30S ribosomal subunit. Forms a tight complex with proteins S10 and S14.

Functionally, binds the lower part of the 30S subunit head. Binds mRNA in the 70S ribosome, positioning it for translation. This Flavobacterium johnsoniae (strain ATCC 17061 / DSM 2064 / JCM 8514 / BCRC 14874 / CCUG 350202 / NBRC 14942 / NCIMB 11054 / UW101) (Cytophaga johnsonae) protein is Small ribosomal subunit protein uS3.